Consider the following 106-residue polypeptide: Immunoglobulin lambda constant 6 (106 aa).

The Ig-like domain occupies 7-101 (PSVTLFPPSS…EGSTVEKTVA (95 aa)). Cys28 and Cys87 are joined by a disulfide.

In terms of assembly, immunoglobulins are composed of two identical heavy chains and two identical light chains; disulfide-linked.

It localises to the secreted. The protein resides in the cell membrane. Its function is as follows. Constant region of immunoglobulin light chains. Immunoglobulins, also known as antibodies, are membrane-bound or secreted glycoproteins produced by B lymphocytes. In the recognition phase of humoral immunity, the membrane-bound immunoglobulins serve as receptors which, upon binding of a specific antigen, trigger the clonal expansion and differentiation of B lymphocytes into immunoglobulins-secreting plasma cells. Secreted immunoglobulins mediate the effector phase of humoral immunity, which results in the elimination of bound antigens. The antigen binding site is formed by the variable domain of one heavy chain, together with that of its associated light chain. Thus, each immunoglobulin has two antigen binding sites with remarkable affinity for a particular antigen. The variable domains are assembled by a process called V-(D)-J rearrangement and can then be subjected to somatic hypermutations which, after exposure to antigen and selection, allow affinity maturation for a particular antigen. This is Immunoglobulin lambda constant 6 from Homo sapiens (Human).